Here is a 558-residue protein sequence, read N- to C-terminus: Glucose-6-phosphate isomerase (558 aa).

At Ala-2 the chain carries N-acetylalanine. Position 12 is an N6-acetyllysine (Lys-12). Lys-34 carries the N6-(2-hydroxyisobutyryl)lysine modification. The residue at position 107 (Ser-107) is a Phosphoserine. Thr-109 carries the phosphothreonine modification. Lys-142 is subject to N6-acetyllysine. A D-glucose 6-phosphate-binding site is contributed by 159-160 (GS). Ser-185 carries the phosphoserine; by CK2 modification. Residue 210 to 215 (SKTFTT) participates in D-glucose 6-phosphate binding. Residue Thr-250 is modified to Phosphothreonine. Positions 354, 358, and 389 each coordinate D-glucose 6-phosphate. Residue Glu-358 is the Proton donor of the active site. Residue His-389 is part of the active site. The residue at position 454 (Lys-454) is an N6-acetyllysine; alternate. Lys-454 is modified (N6-malonyllysine; alternate). Lys-454 is subject to N6-succinyllysine; alternate. Ser-455 carries the post-translational modification Phosphoserine. D-glucose 6-phosphate is bound at residue Lys-519. Lys-519 is a catalytic residue.

Belongs to the GPI family. Homodimer; in the catalytically active form. Monomer in the secreted form. Post-translationally, phosphorylation at Ser-185 by CK2 has been shown to decrease enzymatic activity and may contribute to secretion by a non-classical secretory pathway. In terms of processing, ISGylated.

It localises to the cytoplasm. The protein localises to the secreted. It catalyses the reaction alpha-D-glucose 6-phosphate = beta-D-fructose 6-phosphate. It participates in carbohydrate degradation; glycolysis; D-glyceraldehyde 3-phosphate and glycerone phosphate from D-glucose: step 2/4. In terms of biological role, in the cytoplasm, catalyzes the conversion of glucose-6-phosphate to fructose-6-phosphate, the second step in glycolysis, and the reverse reaction during gluconeogenesis. Besides it's role as a glycolytic enzyme, also acts as a secreted cytokine: acts as an angiogenic factor (AMF) that stimulates endothelial cell motility. Acts as a neurotrophic factor, neuroleukin, for spinal and sensory neurons. It is secreted by lectin-stimulated T-cells and induces immunoglobulin secretion. The protein is Glucose-6-phosphate isomerase of Macaca fascicularis (Crab-eating macaque).